The following is a 443-amino-acid chain: Probable glycine dehydrogenase (decarboxylating) subunit 1 (443 aa).

The protein belongs to the GcvP family. N-terminal subunit subfamily. As to quaternary structure, the glycine cleavage system is composed of four proteins: P, T, L and H. In this organism, the P 'protein' is a heterodimer of two subunits.

It carries out the reaction N(6)-[(R)-lipoyl]-L-lysyl-[glycine-cleavage complex H protein] + glycine + H(+) = N(6)-[(R)-S(8)-aminomethyldihydrolipoyl]-L-lysyl-[glycine-cleavage complex H protein] + CO2. Its function is as follows. The glycine cleavage system catalyzes the degradation of glycine. The P protein binds the alpha-amino group of glycine through its pyridoxal phosphate cofactor; CO(2) is released and the remaining methylamine moiety is then transferred to the lipoamide cofactor of the H protein. In Chlorobium limicola (strain DSM 245 / NBRC 103803 / 6330), this protein is Probable glycine dehydrogenase (decarboxylating) subunit 1.